We begin with the raw amino-acid sequence, 343 residues long: Labda-7,13(16),14-triene synthase (343 aa).

Mg(2+)-binding residues include D114 and E119. The DDXXXE motif signature appears at 114–119 (DDVHVE). R206 lines the substrate pocket. Residues N252, S256, and E260 each coordinate Mg(2+). The NXXXSXXXE motif motif lies at 252-260 (NDLYSFAYE).

This sequence belongs to the terpene synthase family. Mg(2+) serves as cofactor.

It catalyses the reaction (13E)-labda-7,13-dien-15-yl diphosphate = labda-7,13(16),14-triene + diphosphate. Its function is as follows. Involved in the biosynthesis of the labdane-type bicyclic diterpene labda-7,13(16),14-triene. Catalyzes the conversion of labda-7,13(E)-dienyl diphosphate to yield labda-7,13(16),14-triene. The polypeptide is Labda-7,13(16),14-triene synthase (Streptomyces clavuligerus).